Reading from the N-terminus, the 217-residue chain is Vacuolar protein-sorting-associated protein 37 homolog 1 (217 aa).

Positions 1–49 are disordered; the sequence is MFNFWGSKDQQQGQSRPQEASSQSPWYSPSLVSSPSSSRPQSSGQISAQ. Residues 8–20 are compositionally biased toward polar residues; sequence KDQQQGQSRPQEA. Positions 21–47 are enriched in low complexity; the sequence is SSQSPWYSPSLVSSPSSSRPQSSGQIS. Residues 137–217 form the VPS37 C-terminal domain; it reads QEKLNELERQ…IHLAAKTSNI (81 aa).

The protein belongs to the VPS37 family. In terms of assembly, component of the endosomal sorting required for transport complex I (ESCRT-I), composed of ELC, VPS28 and VPS37. Interacts with ELC.

The protein localises to the endosome. In terms of biological role, component of the ESCRT-I complex (endosomal sorting complex required for transport I), a regulator of vesicular trafficking process. Required for the sorting of endocytic ubiquitinated cargos into multivesicular bodies (MVBs). This chain is Vacuolar protein-sorting-associated protein 37 homolog 1 (VPS37-1), found in Arabidopsis thaliana (Mouse-ear cress).